A 135-amino-acid chain; its full sequence is Histone H1, macronuclear (135 aa).

Positions 1–17 (MPAKTATAVKRTTTTKK) are enriched in low complexity. The segment at 1–135 (MPAKTATAVK…GGKKKSAKKN (135 aa)) is disordered. Basic residues-rich tracts occupy residues 18–54 (SAAK…RRTP) and 62–79 (KATK…RSAT). The segment covering 80–112 (KKTTAAPAAAAAPATDAPAAAATPSKATGSAKK) has biased composition (low complexity). Residues 113–135 (ASARKSSAKKPAKGGKKKSAKKN) show a composition bias toward basic residues.

The protein resides in the nucleus. Its subcellular location is the chromosome. Histones H1 are necessary for the condensation of nucleosome chains into higher-order structures. This Euplotes eurystomus (Ciliate) protein is Histone H1, macronuclear.